Reading from the N-terminus, the 302-residue chain is Probable lipid kinase YegS-like (302 aa).

Positions 1–129 (MDKDKVLLVL…IDLGAVNGKL (129 aa)) constitute a DAGKc domain. Residues threonine 39, 65–71 (GDGTLRE), and threonine 92 contribute to the ATP site. Arginine 210, aspartate 213, and leucine 215 together coordinate Mg(2+). The active-site Proton acceptor is the glutamate 268.

It belongs to the diacylglycerol/lipid kinase family. YegS lipid kinase subfamily. Requires Mg(2+) as cofactor. It depends on Ca(2+) as a cofactor.

It localises to the cytoplasm. Probably phosphorylates lipids; the in vivo substrate is unknown. The sequence is that of Probable lipid kinase YegS-like from Pseudomonas aeruginosa (strain UCBPP-PA14).